Reading from the N-terminus, the 572-residue chain is Terminal nucleotidyltransferase 4B (572 aa).

The segment at 1–105 is disordered; the sequence is MYRSGERLLG…ADGGGVVYSG (105 aa). Positions 25 to 34 are enriched in polar residues; it reads ETTNNNNNHH. Over residues 36 to 76 the composition is skewed to low complexity; sequence PGAWARRAGSSASSPPSASSSPHPSAAVPAADPADSASGSS. Over residues 89–102 the composition is skewed to gly residues; the sequence is RAAGGGRADGGGVV. Val151 participates in a covalent cross-link: Glycyl lysine isopeptide (Lys-Gly) (interchain with G-Cter in SUMO2). Asp177 and Asp179 together coordinate Mg(2+). Positions 240, 265, 283, 284, 368, and 372 each coordinate ATP. In terms of domain architecture, PAP-associated spans 308–368; the sequence is NYGVLLIEFF…YIEDPLQPGN (61 aa). The disordered stretch occupies residues 435–572; the sequence is KNRPEPSCNG…RDAPLSDLCR (138 aa). Residues 446-464 show a composition bias toward low complexity; it reads VSSSSATQSSSSDVDSDAT. A Glycyl lysine isopeptide (Lys-Gly) (interchain with G-Cter in SUMO2) cross-link involves residue Lys470. The segment covering 477 to 494 has biased composition (polar residues); it reads STGNRVGSQDVSLESSQA. Ser484 carries the post-translational modification Phosphoserine. Glycyl lysine isopeptide (Lys-Gly) (interchain with G-Cter in SUMO2) cross-links involve residues Lys497, Lys512, and Lys526. Residues 499–514 are compositionally biased toward low complexity; sequence QSTQTTNTSNSTNKSQ. Positions 522 to 553 are enriched in polar residues; it reads RSSSKGFQGTTQTSHGSLMTNKQHQGKSNNQY. Positions 557-563 match the Basic, involved in binding of the RNA primer motif; it reads KKRKHKR.

This sequence belongs to the DNA polymerase type-B-like family. As to quaternary structure, component of a nucleolar TRAMP-like complex, an ATP-dependent exosome regulatory complex consisting of a helicase (MTREX), an oligadenylate polymerase (TENT4B or TENT4A), and a substrate specific RNA-binding factor (ZCCHC7 or ZCCHC8). Several TRAMP-like complexes exist with specific compositions and are associated with nuclear, or nucleolar RNA exosomes. Interacts with CPEB1; the interaction is required for TENT4B-mediated translational control. The cofactor is Mg(2+). Mn(2+) serves as cofactor.

It localises to the nucleus. It is found in the nucleolus. The protein localises to the cytoplasm. It carries out the reaction RNA(n) + ATP = RNA(n)-3'-adenine ribonucleotide + diphosphate. Terminal nucleotidyltransferase that catalyzes preferentially the transfer of ATP and GTP on RNA 3' poly(A) tail creating a heterogeneous 3' poly(A) tail leading to mRNAs stabilization by protecting mRNAs from active deadenylation. Also functions as a catalytic subunit of a TRAMP-like complex which has a poly(A) RNA polymerase activity and is involved in a post-transcriptional quality control mechanism. Polyadenylation with short oligo(A) tails is required for the degradative activity of the exosome on several of its nuclear RNA substrates. Doesn't need a cofactor for polyadenylation activity (in vitro). Required for cytoplasmic polyadenylation of mRNAs involved in carbohydrate metabolism, including the glucose transporter SLC2A1/GLUT1. Plays a role in replication-dependent histone mRNA degradation, probably through terminal uridylation of mature histone mRNAs. May play a role in sister chromatid cohesion. Mediates 3' adenylation of the microRNA MIR21 followed by its 3'-to-5' trimming by the exoribonuclease PARN leading to degradation. Mediates 3' adenylation of H/ACA box snoRNAs (small nucleolar RNAs) followed by its 3'-to-5' trimming by the exoribonuclease PARN which enhances snoRNA stability and maturation. The sequence is that of Terminal nucleotidyltransferase 4B from Homo sapiens (Human).